We begin with the raw amino-acid sequence, 431 residues long: C2H2 type master regulator of conidiophore development brlA (431 aa).

3 disordered regions span residues 29 to 51 (MTSS…SHGS), 211 to 275 (TPQQ…SEEY), and 287 to 306 (IRTH…VRSN). The segment covering 30-48 (TSSFSPLESPTPTPTSLYS) has biased composition (low complexity). Polar residues predominate over residues 225–265 (PSSNYSDFPASLQTFKPHTPSTPVRSLSLGTPRSDTPQSRM). The span at 287–302 (IRTHRQPSRKPSKKQL) shows a compositional bias: basic residues. 2 C2H2-type zinc fingers span residues 321–345 (FKCK…MKSH) and 351–376 (HVCW…TKTH). Positions 390 to 412 (DETSPDYDPEFRGQLTPDGRPIY) are disordered.

The protein localises to the nucleus. In terms of biological role, brlA, abaA and wetA are pivotal regulators of conidiophore development and conidium maturation. They act individually and together to regulate their own expression and that of numerous other sporulation-specific genes. Binds promoters of target genes at brlA response elements (BREs) containing the conserved sequence 5'-(C/A)(A/G)AGGG(G/A)-3'. Regulates the expression levels of seven secondary metabolism gene clusters including a down-regulated cluster putatively involved in the biosynthesis of the mycotoxins roquefortine C and meleagrin. Negatively regulates the expression of cellulase genes. The polypeptide is C2H2 type master regulator of conidiophore development brlA (Penicillium oxalicum (strain 114-2 / CGMCC 5302) (Penicillium decumbens)).